Here is a 296-residue protein sequence, read N- to C-terminus: Chondrolectin (296 aa).

An N-terminal signal peptide occupies residues Met1 to Gly20. Residues Ala21–Met238 lie on the Extracellular side of the membrane. Residues Cys38 to Lys187 enclose the C-type lectin domain. Residues Val197–Pro221 are compositionally biased toward basic and acidic residues. Positions Val197 to Arg229 are disordered. Residues Leu239–Leu266 traverse the membrane as a helical segment. The Cytoplasmic segment spans residues Ser267–Val296.

Expressed in developing motor neurons.

The protein resides in the membrane. Functionally, plays a role in the development of the nervous system such as in neurite outgrowth and elongation. Involved in motor axon growth and guidance. Required for correct interactions of motor axons with the horizontal myoseptum. The sequence is that of Chondrolectin (chodl) from Danio rerio (Zebrafish).